The primary structure comprises 596 residues: Putative ankyrin repeat protein FPV024 (596 aa).

ANK repeat units follow at residues 5 to 34, 37 to 66, 68 to 96, 99 to 128, 130 to 158, 162 to 191, 195 to 225, 229 to 258, 262 to 291, 295 to 324, 326 to 355, 359 to 389, and 394 to 423; these read KLRK…TFSN, ALST…DINK, KSPP…DIEK, LGNS…DPNT, FINY…SLNI, HFKT…SLTI, YNNH…PVNE, LERT…DPNI, CLGT…NVNI, TIDT…NTRL, SRNP…EVNI, EGYT…NPNM, and NENT…DVHS.

The protein is Putative ankyrin repeat protein FPV024 of Fowlpox virus (strain NVSL) (FPV).